Here is a 394-residue protein sequence, read N- to C-terminus: NAD(P)H-quinone oxidoreductase subunit H (394 aa).

Belongs to the complex I 49 kDa subunit family. As to quaternary structure, NDH-1 can be composed of about 15 different subunits; different subcomplexes with different compositions have been identified which probably have different functions.

The protein localises to the cellular thylakoid membrane. It catalyses the reaction a plastoquinone + NADH + (n+1) H(+)(in) = a plastoquinol + NAD(+) + n H(+)(out). The catalysed reaction is a plastoquinone + NADPH + (n+1) H(+)(in) = a plastoquinol + NADP(+) + n H(+)(out). In terms of biological role, NDH-1 shuttles electrons from an unknown electron donor, via FMN and iron-sulfur (Fe-S) centers, to quinones in the respiratory and/or the photosynthetic chain. The immediate electron acceptor for the enzyme in this species is believed to be plastoquinone. Couples the redox reaction to proton translocation, and thus conserves the redox energy in a proton gradient. Cyanobacterial NDH-1 also plays a role in inorganic carbon-concentration. The chain is NAD(P)H-quinone oxidoreductase subunit H from Microcystis aeruginosa (strain NIES-843 / IAM M-2473).